The chain runs to 143 residues: Large ribosomal subunit protein uL11 (143 aa).

The protein belongs to the universal ribosomal protein uL11 family. Part of the ribosomal stalk of the 50S ribosomal subunit. Interacts with L10 and the large rRNA to form the base of the stalk. L10 forms an elongated spine to which L12 dimers bind in a sequential fashion forming a multimeric L10(L12)X complex. Post-translationally, one or more lysine residues are methylated.

Functionally, forms part of the ribosomal stalk which helps the ribosome interact with GTP-bound translation factors. The sequence is that of Large ribosomal subunit protein uL11 from Beutenbergia cavernae (strain ATCC BAA-8 / DSM 12333 / CCUG 43141 / JCM 11478 / NBRC 16432 / NCIMB 13614 / HKI 0122).